Here is a 370-residue protein sequence, read N- to C-terminus: MKKGFSLPLWVAGAARSALKKLVGLSFENYELIKIPYEKKEIKIEIHSVGLLKNDSHALGITFAKSGLDLDITQNLEIWTIASLEKISFENSLQRVPINIIAGSGVGIKEDTSEICISNFAKEVLYENLLDIIPEGFNLKLEIIFPNGAFLAERTSNQSFGIVDGLSIIGTSAETYSSASPDQLEEAKNNLAKLIQNDFKGEVVFVIGENGLNLLKTHNVNLPIIKIGNWIGPLLVDAAIKKVKTVILFGYHGKLIKLAGGIFHTHNHLADGRIEILVYLAVQENVPFEIIVKLSKLDNIENALLFLEKFNQSTADKLFKRLSNTIEKRSFAYVNRYVKTDMEIASIIFDRKRKIRWAGIYGKKYISYFQ.

Belongs to the CbiD family.

The enzyme catalyses Co-precorrin-5B + S-adenosyl-L-methionine = Co-precorrin-6A + S-adenosyl-L-homocysteine. The protein operates within cofactor biosynthesis; adenosylcobalamin biosynthesis; cob(II)yrinate a,c-diamide from sirohydrochlorin (anaerobic route): step 6/10. In terms of biological role, catalyzes the methylation of C-1 in cobalt-precorrin-5B to form cobalt-precorrin-6A. This Prochlorococcus marinus (strain MIT 9215) protein is Cobalt-precorrin-5B C(1)-methyltransferase.